We begin with the raw amino-acid sequence, 74 residues long: Consomatin Ma1 (74 aa).

A signal peptide spans 1–22; the sequence is MQTAYWVMVMMMVWITAPLSEG. A propeptide spanning residues 23–57 is cleaved from the precursor; it reads GKLNGEIRGLVSHILIPQHTLRSLTSRDRSDNGGS. A disulfide bond links Cys-63 and Cys-68. Trp-65 carries the D-tryptophan modification. A 4-hydroxyproline mark is found at Pro-69, Pro-70, and Pro-72.

Belongs to the conotoxin C superfamily. Consomatin family. In terms of tissue distribution, expressed by the venom duct.

It localises to the secreted. Its function is as follows. Moderately activates human somatostatin receptors (SSTR) with a preferential activation of SSTR1 and SSTR4. In vivo, does not cause behavioral changes in mice within a few minutes of intracranial injection, but causes a progressive loss of movement thereafter. Four to five hours after injection, mice recover, even with the highest dose tested. Shows antinociception and antihyperalgesia activities in two mouse models of acute pain, most probably by acting outside the central nervous system. This is Consomatin Ma1 from Conus magus (Magical cone).